The following is a 226-amino-acid chain: Uracil-DNA glycosylase (226 aa).

Asp-68 (proton acceptor) is an active-site residue.

The protein belongs to the uracil-DNA glycosylase (UDG) superfamily. UNG family.

Its subcellular location is the cytoplasm. It carries out the reaction Hydrolyzes single-stranded DNA or mismatched double-stranded DNA and polynucleotides, releasing free uracil.. In terms of biological role, excises uracil residues from the DNA which can arise as a result of misincorporation of dUMP residues by DNA polymerase or due to deamination of cytosine. This chain is Uracil-DNA glycosylase, found in Mycobacteroides abscessus (strain ATCC 19977 / DSM 44196 / CCUG 20993 / CIP 104536 / JCM 13569 / NCTC 13031 / TMC 1543 / L948) (Mycobacterium abscessus).